The sequence spans 72 residues: Translation initiation factor IF-1 (72 aa).

The 72-residue stretch at 1–72 (MAKEELLEFP…TKGRITYRFK (72 aa)) folds into the S1-like domain.

It belongs to the IF-1 family. Component of the 30S ribosomal translation pre-initiation complex which assembles on the 30S ribosome in the order IF-2 and IF-3, IF-1 and N-formylmethionyl-tRNA(fMet); mRNA recruitment can occur at any time during PIC assembly.

The protein resides in the cytoplasm. Functionally, one of the essential components for the initiation of protein synthesis. Stabilizes the binding of IF-2 and IF-3 on the 30S subunit to which N-formylmethionyl-tRNA(fMet) subsequently binds. Helps modulate mRNA selection, yielding the 30S pre-initiation complex (PIC). Upon addition of the 50S ribosomal subunit IF-1, IF-2 and IF-3 are released leaving the mature 70S translation initiation complex. In Maricaulis maris (strain MCS10) (Caulobacter maris), this protein is Translation initiation factor IF-1.